The chain runs to 152 residues: Membrane-spanning 4-domains subfamily A member 13 (152 aa).

The next 4 helical transmembrane spans lie at 1–21 (MIGI…MGQI), 32–52 (TYKT…VFLI), 66–86 (TLII…LTII), and 111–131 (ILLF…IYSC).

It belongs to the MS4A family.

The protein localises to the membrane. May be involved in signal transduction as a component of a multimeric receptor complex. The chain is Membrane-spanning 4-domains subfamily A member 13 (MS4A13) from Homo sapiens (Human).